Reading from the N-terminus, the 536-residue chain is Transcription factor cheR (536 aa).

Positions 19 to 57 form a DNA-binding region, zn(2)-C6 fungal-type; that stretch reads CDRCHRHKLRCERSSVIVNGGVAVPLGPCKRCLKACIPC. 2 disordered regions span residues 70–122 and 220–243; these read AKTG…LSGT and ALTDVEKASTGSSKSAPERGPREE. Residues 88–108 are compositionally biased toward low complexity; it reads AASPAKRAPSPARRPTASTPR.

Its subcellular location is the nucleus. Transcription factor; part of the gene cluster that mediates the biosynthesis of chaetoglobosin A which has a unique inhibitory activity against actin polymerization in mammalian cells. Chaetoglobosin A and its intermediates are involved in the morphological differentiation of C.globosum. Binds directly to asymmetric direct repeats present in the promoters of the chaetoglobosin A cluster genes. The polypeptide is Transcription factor cheR (Chaetomium globosum (strain ATCC 6205 / CBS 148.51 / DSM 1962 / NBRC 6347 / NRRL 1970) (Soil fungus)).